Reading from the N-terminus, the 148-residue chain is UPF0178 protein SH2212 (148 aa).

It belongs to the UPF0178 family.

The protein is UPF0178 protein SH2212 of Staphylococcus haemolyticus (strain JCSC1435).